The primary structure comprises 90 residues: Small ribosomal subunit protein bS20 (90 aa).

Basic residues predominate over residues 1–15 (MANHKSAQKRIRQTK). A disordered region spans residues 1-22 (MANHKSAQKRIRQTKTRTERNR).

Belongs to the bacterial ribosomal protein bS20 family.

Binds directly to 16S ribosomal RNA. This chain is Small ribosomal subunit protein bS20, found in Helicobacter hepaticus (strain ATCC 51449 / 3B1).